We begin with the raw amino-acid sequence, 416 residues long: Gamma-glutamyl phosphate reductase (416 aa).

It belongs to the gamma-glutamyl phosphate reductase family.

It localises to the cytoplasm. It catalyses the reaction L-glutamate 5-semialdehyde + phosphate + NADP(+) = L-glutamyl 5-phosphate + NADPH + H(+). The protein operates within amino-acid biosynthesis; L-proline biosynthesis; L-glutamate 5-semialdehyde from L-glutamate: step 2/2. In terms of biological role, catalyzes the NADPH-dependent reduction of L-glutamate 5-phosphate into L-glutamate 5-semialdehyde and phosphate. The product spontaneously undergoes cyclization to form 1-pyrroline-5-carboxylate. This chain is Gamma-glutamyl phosphate reductase, found in Leptospira borgpetersenii serovar Hardjo-bovis (strain JB197).